Here is a 205-residue protein sequence, read N- to C-terminus: Glycerol-3-phosphate acyltransferase (205 aa).

At 1–3 (MSA) the chain is on the periplasmic side. A helical transmembrane segment spans residues 4–24 (IAPGMILIAYLCGSISSAILV). The Cytoplasmic portion of the chain corresponds to 25–52 (CRLCGLPDPRTSGSGNPGATNVLRIGGK). A helical membrane pass occupies residues 53–73 (GAAVAVLIFDVLKGMLPVWGA). Over 74 to 80 (YELGVSP) the chain is Periplasmic. The chain crosses the membrane as a helical span at residues 81 to 101 (FWLGLIAIAACLGHIWPVFFG). The Cytoplasmic portion of the chain corresponds to 102-111 (FKGGKGVATA). The chain crosses the membrane as a helical span at residues 112-132 (FGAIAPISWDLTGVMAGTWLL). At 133–137 (TVLLS) the chain is on the periplasmic side. A helical transmembrane segment spans residues 138 to 158 (GYSSLGAIVSALIAPFYVWWF). The Cytoplasmic portion of the chain corresponds to 159 to 205 (KPQFTFPVSMLSCLILLRHHDNIQRLWRRQETKIWTKFKRKREKDPE).

Belongs to the PlsY family. In terms of assembly, probably interacts with PlsX.

Its subcellular location is the cell inner membrane. The catalysed reaction is sn-glycerol 3-phosphate + an acyl-CoA = a 1-acyl-sn-glycero-3-phosphate + CoA. The enzyme catalyses a fatty acyl-[ACP] + sn-glycerol 3-phosphate = a 1-acyl-sn-glycero-3-phosphate + holo-[ACP]. The protein operates within lipid metabolism; phospholipid metabolism. Functionally, catalyzes the transfer of an acyl group from acyl-ACP to glycerol-3-phosphate (G3P) to form lysophosphatidic acid (LPA). This enzyme can also utilize acyl-CoA as fatty acyl donor, but not acyl-PO(4). This chain is Glycerol-3-phosphate acyltransferase, found in Shigella flexneri serotype 5b (strain 8401).